A 625-amino-acid chain; its full sequence is tRNA uridine 5-carboxymethylaminomethyl modification enzyme MnmG (625 aa).

11 to 16 (GAGHAG) serves as a coordination point for FAD. 271 to 285 (GPRYCPSIETKIVTF) is a binding site for NAD(+).

The protein belongs to the MnmG family. As to quaternary structure, homodimer. Heterotetramer of two MnmE and two MnmG subunits. FAD serves as cofactor.

Its subcellular location is the cytoplasm. Functionally, NAD-binding protein involved in the addition of a carboxymethylaminomethyl (cmnm) group at the wobble position (U34) of certain tRNAs, forming tRNA-cmnm(5)s(2)U34. The protein is tRNA uridine 5-carboxymethylaminomethyl modification enzyme MnmG of Parabacteroides distasonis (strain ATCC 8503 / DSM 20701 / CIP 104284 / JCM 5825 / NCTC 11152).